Here is a 451-residue protein sequence, read N- to C-terminus: Heme sensor protein HssS (451 aa).

The next 2 membrane-spanning stretches (helical) occupy residues 9 to 29 and 164 to 184; these read IAIY…LFTN and IFLA…VIAS. The HAMP domain maps to 186–238; that stretch reads YSIIKPVTALKNATTRIMKGDFSTPIKQTRHDEIGTLQSRFNTMRQNLGQVDQ. The Histidine kinase domain occupies 246–451; that stretch reads NVSHEIKTPL…KTQFIVKLFI (206 aa). His249 bears the Phosphohistidine; by autocatalysis mark.

Autophosphorylated.

Its subcellular location is the cell membrane. The catalysed reaction is ATP + protein L-histidine = ADP + protein N-phospho-L-histidine.. Member of the two-component regulatory system HssS/HssR involved in intracellular heme homeostasis and tempering of staphylococcal virulence. HssS functions as a heme sensor histidine kinase which is autophosphorylated at a histidine residue and transfers its phosphate group to an aspartate residue of HssR. HssR/HssS activates the expression of HrtAB, an efflux pump, in response to extracellular heme, hemin, hemoglobin or blood. In Staphylococcus epidermidis (strain ATCC 12228 / FDA PCI 1200), this protein is Heme sensor protein HssS (hssS).